The chain runs to 314 residues: tRNA pseudouridine synthase B (314 aa).

A substrate-binding site is contributed by His-43. Asp-48 serves as the catalytic Nucleophile. Substrate is bound by residues Tyr-76, Tyr-179, and Leu-200.

It belongs to the pseudouridine synthase TruB family. Type 1 subfamily.

It catalyses the reaction uridine(55) in tRNA = pseudouridine(55) in tRNA. In terms of biological role, responsible for synthesis of pseudouridine from uracil-55 in the psi GC loop of transfer RNAs. This is tRNA pseudouridine synthase B from Salmonella arizonae (strain ATCC BAA-731 / CDC346-86 / RSK2980).